The sequence spans 669 residues: Hypoxia-inducible factor 3-alpha (669 aa).

Residues Met-1–Arg-27 are disordered. The span at Ser-10–Arg-27 shows a compositional bias: basic and acidic residues. The region spanning Leu-14–His-67 is the bHLH domain. Residues Gln-77–Leu-100 form a nuclear localization signal region. PAS domains follow at residues Gly-82 to Arg-154 and Pro-227 to Gly-297. A nuclear export signal region spans residues Gly-230–Ala-274. The interval Glu-354–Leu-389 is disordered. The short motif at Leu-414–Leu-418 is the LRRLL element. Residues Thr-430–Leu-444 show a composition bias toward polar residues. The segment at Thr-430–Glu-451 is disordered. The tract at residues Leu-452 to Asp-581 is ODD. Residues Val-454 to Glu-506 form an NTAD region. Lys-467 participates in a covalent cross-link: Glycyl lysine isopeptide (Lys-Gly) (interchain with G-Cter in ubiquitin). An LAPYISMD motif is present at residues Leu-490–Asp-497. 4-hydroxyproline is present on Pro-492. 2 disordered regions span residues Arg-523 to His-600 and Ala-619 to Asp-669. Composition is skewed to low complexity over residues Leu-530 to Pro-541 and Ser-550 to Pro-564. Lys-570 is covalently cross-linked (Glycyl lysine isopeptide (Lys-Gly) (interchain with G-Cter in ubiquitin)). Low complexity predominate over residues Pro-629 to Pro-646.

Isoform 2 interacts (via ODD domain) with VHL (via beta domain). Isoform 4 interacts with HIF1A; the interaction inhibits the binding of HIF1A to hypoxia-responsive element (HRE) and HIF1A/ARNT-dependent transcriptional activation. Isoform 4 interacts with ARNT; the interaction occurs in a HIF1A- and DNA-binding-independent manner and does not induce HIF1A/ARNT-dependent transcriptional activation. Isoform 4 interacts with EPAS1. Interacts with BAD, BCL2L2 and MCL1. In terms of processing, in normoxia, hydroxylated on Pro-492 in the oxygen-dependent degradation domain (ODD) by prolyl hydroxylase(s) (PHD). The hydroxylated proline promotes interaction with VHL, initiating rapid ubiquitination and subsequent proteasomal degradation. Ubiquitinated; ubiquitination occurs in a VHL- and oxygen-dependent pathway and subsequently targeted for proteasomal degradation. In terms of tissue distribution, expressed in vascular cells (at protein level). Expressed in kidney. Expressed in lung epithelial cells. Expressed in endothelial cells (venous and arterial cells from umbilical cord and aortic endothelial cells) and in vascular smooth muscle cells (aorta). Strongly expressed in the heart, placenta, and skeletal muscle, whereas a weak expression profile was found in the lung, liver, and kidney. Expressed weakly in cell renal cell carcinoma (CC-RCC) compared to normal renal cells. Expression is down-regulated in numerous kidney tumor cells compared to non tumor kidney tissues. Isoform 2 is expressed in heart, placenta, lung, liver, skeletal muscle and pancreas and in numerous cancer cell lines. Isoform 3 and isoform 4 are weakly expressed in heart, placenta, lung, liver, skeletal muscle and pancreas. Isoform 4 is expressed in fetal tissues, such as heart, brain, thymus, lung, liver, skeletal kidney and spleen. Isoform 3 is weakly expressed in fetal tissues, such as liver and kidney.

It localises to the nucleus. It is found in the cytoplasm. The protein resides in the nucleus speckle. The protein localises to the mitochondrion. In terms of biological role, acts as a transcriptional regulator in adaptive response to low oxygen tension. Acts as a regulator of hypoxia-inducible gene expression. Functions as an inhibitor of angiogenesis in hypoxic cells of the cornea. Plays a role in the development of the cardiorespiratory system. May also be involved in apoptosis. Attenuates the ability of transcription factor HIF1A to bind to hypoxia-responsive elements (HRE) located within the enhancer/promoter of hypoxia-inducible target genes and hence inhibits HRE-driven transcriptional activation. Also inhibits hypoxia-inducible ARNT-mediated gene expression. Its function is as follows. Attenuates the ability of transcription factor HIF1A to bind to hypoxia-responsive elements (HRE) located within the enhancer/promoter of hypoxia-inducible target genes and hence inhibits HRE-driven transcriptional activation. Functionally, attenuates the ability of transcription factor HIF1A and EPAS1/HIF2A to bind to hypoxia-responsive elements (HRE) located within the enhancer/promoter of hypoxia-inducible target genes and hence inhibits HRE-driven transcriptional activation. May act as a tumor suppressor and inhibits malignant cell transformation. This chain is Hypoxia-inducible factor 3-alpha, found in Homo sapiens (Human).